Consider the following 146-residue polypeptide: Large ribosomal subunit protein uL15 (146 aa).

The interval 1 to 51 is disordered; the sequence is MQLNTLKPAEGSKKNRRRVGRGIGSGLGKTAGRGHKGQKSRSGGFHKVGFE. The span at 21-31 shows a compositional bias: gly residues; the sequence is RGIGSGLGKTA.

Belongs to the universal ribosomal protein uL15 family. In terms of assembly, part of the 50S ribosomal subunit.

Its function is as follows. Binds to the 23S rRNA. The polypeptide is Large ribosomal subunit protein uL15 (Polynucleobacter asymbioticus (strain DSM 18221 / CIP 109841 / QLW-P1DMWA-1) (Polynucleobacter necessarius subsp. asymbioticus)).